Consider the following 365-residue polypeptide: Eukaryotic translation initiation factor 3 subunit H (365 aa).

The 150-residue stretch at 11–160 folds into the MPN domain; it reads VKVEALVVMK…LRAFRLSPKF (150 aa).

Belongs to the eIF-3 subunit H family. Component of the eukaryotic translation initiation factor 3 (eIF-3) complex.

The protein localises to the cytoplasm. Functionally, component of the eukaryotic translation initiation factor 3 (eIF-3) complex, which is involved in protein synthesis of a specialized repertoire of mRNAs and, together with other initiation factors, stimulates binding of mRNA and methionyl-tRNAi to the 40S ribosome. The eIF-3 complex specifically targets and initiates translation of a subset of mRNAs involved in cell proliferation. The polypeptide is Eukaryotic translation initiation factor 3 subunit H (Aspergillus clavatus (strain ATCC 1007 / CBS 513.65 / DSM 816 / NCTC 3887 / NRRL 1 / QM 1276 / 107)).